A 560-amino-acid chain; its full sequence is Chaperonin GroEL 2 (560 aa).

Residues 29–32 (TLGP), 86–90 (DGTTT), glycine 413, 478–480 (NAA), and aspartate 494 contribute to the ATP site.

It belongs to the chaperonin (HSP60) family. Forms a cylinder of 14 subunits composed of two heptameric rings stacked back-to-back. Interacts with the co-chaperonin GroES.

The protein resides in the cytoplasm. The enzyme catalyses ATP + H2O + a folded polypeptide = ADP + phosphate + an unfolded polypeptide.. Functionally, together with its co-chaperonin GroES, plays an essential role in assisting protein folding. The GroEL-GroES system forms a nano-cage that allows encapsulation of the non-native substrate proteins and provides a physical environment optimized to promote and accelerate protein folding. This Trichormus variabilis (strain ATCC 29413 / PCC 7937) (Anabaena variabilis) protein is Chaperonin GroEL 2.